A 503-amino-acid polypeptide reads, in one-letter code: Probable cytosol aminopeptidase (503 aa).

Residues Lys270 and Asp275 each contribute to the Mn(2+) site. The active site involves Lys282. Residues Asp293, Asp352, and Glu354 each contribute to the Mn(2+) site. Arg356 is an active-site residue.

Belongs to the peptidase M17 family. Mn(2+) is required as a cofactor.

It localises to the cytoplasm. The enzyme catalyses Release of an N-terminal amino acid, Xaa-|-Yaa-, in which Xaa is preferably Leu, but may be other amino acids including Pro although not Arg or Lys, and Yaa may be Pro. Amino acid amides and methyl esters are also readily hydrolyzed, but rates on arylamides are exceedingly low.. The catalysed reaction is Release of an N-terminal amino acid, preferentially leucine, but not glutamic or aspartic acids.. In terms of biological role, presumably involved in the processing and regular turnover of intracellular proteins. Catalyzes the removal of unsubstituted N-terminal amino acids from various peptides. The chain is Probable cytosol aminopeptidase from Erwinia tasmaniensis (strain DSM 17950 / CFBP 7177 / CIP 109463 / NCPPB 4357 / Et1/99).